The primary structure comprises 101 residues: Small ribosomal subunit protein uS14A (101 aa).

The disordered stretch occupies residues 29-73; sequence AIISSPSTPADARAAAQSELNRQPRDASPVRVRNRDAVDGRPRGH. The span at 61-70 shows a compositional bias: basic and acidic residues; sequence RNRDAVDGRP.

The protein belongs to the universal ribosomal protein uS14 family. As to quaternary structure, part of the 30S ribosomal subunit. Contacts proteins S3 and S10.

Functionally, binds 16S rRNA, required for the assembly of 30S particles and may also be responsible for determining the conformation of the 16S rRNA at the A site. The sequence is that of Small ribosomal subunit protein uS14A from Mycolicibacterium gilvum (strain PYR-GCK) (Mycobacterium gilvum (strain PYR-GCK)).